We begin with the raw amino-acid sequence, 375 residues long: Phosphoglucan phosphatase DSP4, amyloplastic (375 aa).

The transit peptide at 1–42 (MFCVQNLPRSSALPLQSFKSHQRRPPCSVNTLGVMSNVNLHR) directs the protein to the amyloplast. Residues 49 to 71 (ISGPTSSAETSDANVEEEKSETY) are disordered. Polar residues predominate over residues 51-61 (GPTSSAETSDA). Residues 92–249 (NYNFIRPDLI…AADILTGLRK (158 aa)) enclose the Tyrosine-protein phosphatase domain. Cys-193 functions as the Phosphocysteine intermediate in the catalytic mechanism. 194–199 (TAGLGR) contacts substrate. The interval 254 to 330 (LTWKNPDCTT…NKDGHVNNFV (77 aa)) is polysaccharide binding.

As to expression, expressed in phloem parenchyma of 16-24 week old seedlings and 2 year old trees (at protein level). Expressed in leaves of 16-24 week old seedlings and 2 year old trees.

Its subcellular location is the plastid. It is found in the amyloplast. The protein resides in the nucleus. Its function is as follows. Starch granule-associated phosphoglucan phosphatase involved in the control of starch accumulation. Acts as a major regulator of the initial steps of starch degradation at the granule surface. Functions during the day by dephosphorylating the night-accumulated phospho-oligosaccharides. Can release phosphate from both the C6 and the C3 positions. This chain is Phosphoglucan phosphatase DSP4, amyloplastic, found in Castanea sativa (Sweet chestnut).